The sequence spans 471 residues: Probable multidrug-efflux transporter MT1670 (471 aa).

Transmembrane regions (helical) follow at residues 23-43 (IVLA…ISLL), 55-75 (LYAW…TTVN), 91-111 (LAVF…QILV), 116-136 (LQGI…NSTL), 146-166 (ALVS…GGLF), 174-194 (WAFG…PVAL), 213-233 (VPVW…VAAL), 237-257 (LVQT…FVVV), 279-299 (IYLT…VPLF), 308-328 (PVAA…GEVA), 337-357 (VIGH…ALGA), 366-386 (VGII…IGIA), 410-430 (AINV…GVVV), and 438-458 (VAAA…GVIA).

It belongs to the major facilitator superfamily.

It is found in the cell membrane. Its function is as follows. Could be involved in fluoroquinolones efflux. The polypeptide is Probable multidrug-efflux transporter MT1670 (Mycobacterium tuberculosis (strain CDC 1551 / Oshkosh)).